The chain runs to 448 residues: Histidinol dehydrogenase (448 aa).

Tyrosine 136, glutamine 197, and asparagine 220 together coordinate NAD(+). Substrate is bound by residues serine 243, glutamine 265, and histidine 268. The Zn(2+) site is built by glutamine 265 and histidine 268. Residues glutamate 333 and histidine 334 each act as proton acceptor in the active site. Residues histidine 334, aspartate 367, glutamate 421, and histidine 426 each coordinate substrate. A Zn(2+)-binding site is contributed by aspartate 367. Zn(2+) is bound at residue histidine 426.

This sequence belongs to the histidinol dehydrogenase family. Requires Zn(2+) as cofactor.

It carries out the reaction L-histidinol + 2 NAD(+) + H2O = L-histidine + 2 NADH + 3 H(+). It participates in amino-acid biosynthesis; L-histidine biosynthesis; L-histidine from 5-phospho-alpha-D-ribose 1-diphosphate: step 9/9. Its function is as follows. Catalyzes the sequential NAD-dependent oxidations of L-histidinol to L-histidinaldehyde and then to L-histidine. The polypeptide is Histidinol dehydrogenase (Pseudomonas syringae pv. tomato (strain ATCC BAA-871 / DC3000)).